Consider the following 311-residue polypeptide: CARD domain-containing protein E10 (311 aa).

The CARD domain occupies 21 to 110; sequence IWDVERLCLE…EHLVDLLERA (90 aa). Disordered regions lie at residues 125-181, 203-230, and 243-311; these read ESGA…GGVY, GAGR…GGRD, and IPEP…FFCC. Residues 140–152 show a composition bias toward polar residues; that stretch reads EDNSGYTALLPTN. Positions 252-272 are enriched in gly residues; sequence SGGGGRGGGVRYDAGGDGRLG.

It localises to the host cell membrane. Functionally, activates host NF-kappa-B and JNK pathways. Induces hyperphosphorylation and redistribution of host bcl-10 from the cytoplasm to the plasma membrane. The inhibitory effect of cellular bcl-10 on NF-kappa-B pathway is then overcome allowing NF-kappa-B activation. This Equus caballus (Horse) protein is CARD domain-containing protein E10 (E10).